A 1323-amino-acid polypeptide reads, in one-letter code: Regulatory protein ADR1 (1323 aa).

Serine 54 carries the phosphoserine modification. 2 consecutive C2H2-type zinc fingers follow at residues 104-126 (FVCEVCTRAFARQEHLKRHYRSH) and 132-155 (YPCGLCNRCFTRRDLLIRHAQKIH). The disordered stretch occupies residues 175 to 216 (KARKNSASSVKFQTPTYGTPDNGNFLNRTTANTRRKASPEAN). The span at 179 to 206 (NSASSVKFQTPTYGTPDNGNFLNRTTAN) shows a compositional bias: polar residues. Phosphothreonine is present on residues threonine 188 and threonine 193. At serine 230 the chain carries Phosphoserine; by PKA; in vitro. Serine 258 is modified (phosphoserine). Threonine 259 is subject to Phosphothreonine. Phosphoserine is present on residues serine 299, serine 323, and serine 325. Position 327 is a phosphothreonine (threonine 327).

Post-translationally, phosphorylation at Ser-230 by cAMP-dependent protein kinase A does not affect DNA binding but appears to prevent transcription of ADH2 during glucose repression.

It is found in the nucleus. Required for transcriptional activation of glucose-repressible alcohol dehydrogenase (ADH2). The sequence is that of Regulatory protein ADR1 (ADR1) from Saccharomyces cerevisiae (strain ATCC 204508 / S288c) (Baker's yeast).